We begin with the raw amino-acid sequence, 219 residues long: Transcriptional regulatory protein QseB (219 aa).

The Response regulatory domain occupies 2–116 (RILLIEDDML…EVAARLEALM (115 aa)). Asp51 is subject to 4-aspartylphosphate. Positions 124–218 (SNELRHGNVM…VHGIGYTLGE (95 aa)) form a DNA-binding region, ompR/PhoB-type.

In terms of processing, phosphorylated by QseC.

The protein localises to the cytoplasm. Functionally, member of a two-component regulatory system QseB/QseC. Activates the flagella regulon by activating transcription of FlhDC. Currently it is not known whether this effect is direct or not. The chain is Transcriptional regulatory protein QseB (qseB) from Escherichia coli O157:H7.